The chain runs to 163 residues: Large ribosomal subunit protein uL22c (163 aa).

Belongs to the universal ribosomal protein uL22 family. Part of the 50S ribosomal subunit.

The protein localises to the plastid. It is found in the chloroplast. Its function is as follows. This protein binds specifically to 23S rRNA. Functionally, the globular domain of the protein is located near the polypeptide exit tunnel on the outside of the subunit, while an extended beta-hairpin is found that lines the wall of the exit tunnel in the center of the 70S ribosome. The protein is Large ribosomal subunit protein uL22c (rpl22) of Lobularia maritima (Sweet alyssum).